Reading from the N-terminus, the 89-residue chain is Large ribosomal subunit protein bL27 (89 aa).

Residues 1–24 (MAHKKGTGSTRNGRDSNSKRLGVK) are disordered.

It belongs to the bacterial ribosomal protein bL27 family.

This chain is Large ribosomal subunit protein bL27, found in Synechococcus sp. (strain WH7803).